A 394-amino-acid chain; its full sequence is Galactose-3-O-sulfotransferase 2 (394 aa).

At 1-8 the chain is on the cytoplasmic side; the sequence is MWGSQHRS. The helical; Signal-anchor for type II membrane protein transmembrane segment at 9–29 threads the bilayer; sequence FQVALWFLVLAVFLLVGFLHV. The Lumenal portion of the chain corresponds to 30 to 394; the sequence is DFRLLIPDKV…TPKDIPFLKK (365 aa). N-linked (GlcNAc...) asparagine glycosylation is found at N72, N176, N284, and N326.

It belongs to the galactose-3-O-sulfotransferase family.

It is found in the golgi apparatus. The protein resides in the golgi stack membrane. Its pathway is protein modification; carbohydrate sulfation. With respect to regulation, strongly inhibited by Cu(2+) and Zn(2+). Transfers a sulfate group to the hydroxyl group at C3 of non-reducing beta-galactosyl residues. Acts both on type 1 (Gal-beta-1,3-GlcNAc) and type 2 (Gal-beta-1,4-GlcNAc) chains with similar efficiency. The sequence is that of Galactose-3-O-sulfotransferase 2 (Gal3st2) from Mus musculus (Mouse).